Reading from the N-terminus, the 309-residue chain is MTLRNSSSVTEFILVGLSEQPELQLPLFLLFLGIYVFTVVGNLGLITLIGINPSLHTPMYFFLFNLSFIDLCYSCVFTPKMLNDFVSESIISYVGCMTQLFFFCFFVNSECYVLVSMAYDRYVAICNPLLYMVTMSPRVCFLLMFGSYVVGFAGAMAHTGSMLRLTFCDSNVIDHYLCDVLPLLQLSCTSTHVSELVFFIVVGVITMLSSISIVISYALILSNILCIPSAEGRSKAFSTWGSHIIAVALFFGSGTFTYLTTSFPGSMNHGRFASVFYTNVVPMLNPSIYSLRNKDDKLALGKTLKRVLF.

Topologically, residues 1 to 25 (MTLRNSSSVTEFILVGLSEQPELQL) are extracellular. An N-linked (GlcNAc...) asparagine glycan is attached at N5. Residues 26–46 (PLFLLFLGIYVFTVVGNLGLI) traverse the membrane as a helical segment. The Cytoplasmic segment spans residues 47-54 (TLIGINPS). Residues 55 to 75 (LHTPMYFFLFNLSFIDLCYSC) traverse the membrane as a helical segment. At 76-98 (VFTPKMLNDFVSESIISYVGCMT) the chain is on the extracellular side. A disulfide bond links C96 and C188. Residues 99–119 (QLFFFCFFVNSECYVLVSMAY) form a helical membrane-spanning segment. The Cytoplasmic portion of the chain corresponds to 120 to 138 (DRYVAICNPLLYMVTMSPR). A helical membrane pass occupies residues 139-159 (VCFLLMFGSYVVGFAGAMAHT). Topologically, residues 160-196 (GSMLRLTFCDSNVIDHYLCDVLPLLQLSCTSTHVSEL) are extracellular. A helical membrane pass occupies residues 197-216 (VFFIVVGVITMLSSISIVIS). The Cytoplasmic segment spans residues 217-236 (YALILSNILCIPSAEGRSKA). The helical transmembrane segment at 237-257 (FSTWGSHIIAVALFFGSGTFT) threads the bilayer. Over 258-270 (YLTTSFPGSMNHG) the chain is Extracellular. Residues 271–291 (RFASVFYTNVVPMLNPSIYSL) form a helical membrane-spanning segment. Residues 292 to 309 (RNKDDKLALGKTLKRVLF) lie on the Cytoplasmic side of the membrane.

Belongs to the G-protein coupled receptor 1 family.

It is found in the cell membrane. Functionally, odorant receptor. This chain is Olfactory receptor 8B4 (OR8B4), found in Homo sapiens (Human).